We begin with the raw amino-acid sequence, 215 residues long: Variable small protein 6 (215 aa).

The signal sequence occupies residues 1 to 18 (MRKRISAIIMTLFMVFMS). Cysteine 19 carries N-palmitoyl cysteine lipidation. Cysteine 19 is lipidated: S-diacylglycerol cysteine.

This sequence belongs to the variable small protein (Vsp) family.

The protein resides in the cell outer membrane. Its function is as follows. The Vlp and Vsp proteins are antigenically distinct proteins, only one vlp or vsp gene is transcriptionally active at any one time. Switching between these genes is a mechanism of host immune response evasion. The sequence is that of Variable small protein 6 from Borrelia hermsii.